Consider the following 119-residue polypeptide: Ribosome-binding factor A (119 aa).

The protein belongs to the RbfA family. In terms of assembly, monomer. Binds 30S ribosomal subunits, but not 50S ribosomal subunits or 70S ribosomes.

The protein localises to the cytoplasm. Its function is as follows. One of several proteins that assist in the late maturation steps of the functional core of the 30S ribosomal subunit. Associates with free 30S ribosomal subunits (but not with 30S subunits that are part of 70S ribosomes or polysomes). Required for efficient processing of 16S rRNA. May interact with the 5'-terminal helix region of 16S rRNA. The protein is Ribosome-binding factor A of Wolinella succinogenes (strain ATCC 29543 / DSM 1740 / CCUG 13145 / JCM 31913 / LMG 7466 / NCTC 11488 / FDC 602W) (Vibrio succinogenes).